The primary structure comprises 110 residues: Ubiquitin-related modifier 1 (110 aa).

1-thioglycine is present on glycine 110. Glycine 110 is covalently cross-linked (Glycyl lysine isopeptide (Gly-Lys) (interchain with K-? in acceptor proteins)).

This sequence belongs to the URM1 family. In terms of assembly, homodimer; homodimerization may provide an autoprotection to the highly active C-terminal residue before attacking its substrates. Forms a conjugate with the target protein AHP1. In terms of processing, C-terminal thiocarboxylation occurs in 2 steps, it is first acyl-adenylated (-COAMP) via the hesA/moeB/thiF part of UBA4, then thiocarboxylated (-COSH) via the rhodanese domain of UBA4.

It is found in the cytoplasm. It functions in the pathway tRNA modification; 5-methoxycarbonylmethyl-2-thiouridine-tRNA biosynthesis. In terms of biological role, acts as a sulfur carrier required for 2-thiolation of mcm(5)S(2)U at tRNA wobble positions of cytosolic tRNA(Lys), tRNA(Glu) and tRNA(Gln). Serves as sulfur donor in tRNA 2-thiolation reaction by being thiocarboxylated (-COSH) at its C-terminus by the MOCS3 homolog UBA4. The sulfur is then transferred to tRNA to form 2-thiolation of mcm(5)S(2)U. Prior mcm(5) tRNA modification by the elongator complex is required for 2-thiolation. Also acts as a ubiquitin-like protein (UBL) that is covalently conjugated via an isopeptide bond to lysine residues of target proteins such as AHP1. Conjugation does not depend on the canonical cascade of E2 ubiquitin-conjugating enzymes and/or E3 ligases. The conjugation reaction requires a thiocarboxylated C-terminus of URM1 and a peroxidatic cysteine in the target protein, as the sulfur atom of the URM1 thiocarboxyl group is transferred to redox-active cysteine residues in the target protein. Oxidative stress specifically induces the formation of UBL-protein conjugates. Covalent modification with URM1 promotes the phase separation of a wide range of proteins into condensates like stress granules. In Chaetomium thermophilum (strain DSM 1495 / CBS 144.50 / IMI 039719) (Thermochaetoides thermophila), this protein is Ubiquitin-related modifier 1.